Here is a 397-residue protein sequence, read N- to C-terminus: Elongation factor Tu (397 aa).

In terms of domain architecture, tr-type G spans 10 to 206 (KPHVNIGTIG…AVDDNVPEPE (197 aa)). The interval 19-26 (GHVDHGKT) is G1. Residue 19–26 (GHVDHGKT) coordinates GTP. T26 serves as a coordination point for Mg(2+). Positions 62–66 (GITIN) are G2. Residues 83 to 86 (DAPG) form a G3 region. Residues 83–87 (DAPGH) and 138–141 (NKSD) each bind GTP. Residues 138–141 (NKSD) form a G4 region. The G5 stretch occupies residues 176-178 (SAL).

The protein belongs to the TRAFAC class translation factor GTPase superfamily. Classic translation factor GTPase family. EF-Tu/EF-1A subfamily. Monomer.

The protein resides in the cytoplasm. The catalysed reaction is GTP + H2O = GDP + phosphate + H(+). In terms of biological role, GTP hydrolase that promotes the GTP-dependent binding of aminoacyl-tRNA to the A-site of ribosomes during protein biosynthesis. The chain is Elongation factor Tu from Brevibacterium linens.